Consider the following 295-residue polypeptide: Calcium-regulated actin-bundling protein (295 aa).

In terms of assembly, monomer.

In terms of biological role, may contribute to the structure and reorganization of filopodia and pseudopodia accompanying cell movements. This is Calcium-regulated actin-bundling protein (abpB) from Dictyostelium discoideum (Social amoeba).